The primary structure comprises 167 residues: Ribonuclease H (167 aa).

An RNase H type-1 domain is found at 1–143; the sequence is MYKQIEIFTD…CDQLARKAAK (143 aa). Residues aspartate 10, glutamate 48, aspartate 70, and aspartate 135 each contribute to the Mg(2+) site.

Belongs to the RNase H family. Monomer. Mg(2+) is required as a cofactor.

It is found in the cytoplasm. The catalysed reaction is Endonucleolytic cleavage to 5'-phosphomonoester.. Functionally, endonuclease that specifically degrades the RNA of RNA-DNA hybrids. In Blochmanniella floridana, this protein is Ribonuclease H.